The chain runs to 297 residues: NADH-ubiquinone oxidoreductase chain 1 (297 aa).

9 helical membrane passes run 1–21 (MKSL…TLAE), 34–54 (PNHV…KLIL), 66–86 (WLFV…WLVI), 99–119 (LSIL…IYTG), 139–159 (VSYE…GATL), 170–190 (GTVL…AALA), 206–228 (LVAG…GEYA), 235–257 (TVLN…IWIR), and 277–297 (LPFL…LDLF).

Belongs to the complex I subunit 1 family.

It is found in the mitochondrion inner membrane. It carries out the reaction a ubiquinone + NADH + 5 H(+)(in) = a ubiquinol + NAD(+) + 4 H(+)(out). Its function is as follows. Core subunit of the mitochondrial membrane respiratory chain NADH dehydrogenase (Complex I) that is believed to belong to the minimal assembly required for catalysis. Complex I functions in the transfer of electrons from NADH to the respiratory chain. The immediate electron acceptor for the enzyme is believed to be ubiquinone. The protein is NADH-ubiquinone oxidoreductase chain 1 of Hyaloraphidium curvatum (Lower fungus).